A 467-amino-acid chain; its full sequence is Immunoglobulin superfamily member 21 (467 aa).

A signal peptide spans 1–24 (MRTAPSLRRCVCLLLAAILDLARG). In terms of domain architecture, Ig-like 1 spans 25 to 132 (YLTVNIEPLP…RATREKVVLA (108 aa)). C46 and C116 are oxidised to a cystine. N-linked (GlcNAc...) asparagine glycans are attached at residues N82 and N165. Residues 229 to 259 (LSLLDAENRGGRPYTERPSRGLTPDPNILLQ) form a disordered region. Over residues 234-247 (AENRGGRPYTERPS) the composition is skewed to basic and acidic residues. One can recognise an Ig-like 2 domain in the interval 344–429 (PKIVMTPSRA…GSTDTHTRLI (86 aa)). N-linked (GlcNAc...) asparagine glycosylation is found at N407 and N444.

As to quaternary structure, interacts (Ig-like 1 domain) with NRXN2 (via Laminin G-like 1 domain) in a trans-interaction manner.

It localises to the postsynaptic cell membrane. Involved in synaptic inhibition in the brain. Selectively regulates inhibitory presynaptic differentiation through interacting with presynaptic NRXN2. The chain is Immunoglobulin superfamily member 21 from Homo sapiens (Human).